Consider the following 119-residue polypeptide: DNA-binding protein Maeo_0998 (119 aa).

Residues 1–11 show a composition bias toward basic and acidic residues; sequence MDIEEIKRQKM. Residues 1–36 are disordered; it reads MDIEEIKRQKMMELQQQQAQGAPNPEEIQQQQEQER. The segment covering 15 to 32 has biased composition (low complexity); sequence QQQQAQGAPNPEEIQQQQ.

This sequence belongs to the PDCD5 family.

In Methanococcus aeolicus (strain ATCC BAA-1280 / DSM 17508 / OCM 812 / Nankai-3), this protein is DNA-binding protein Maeo_0998.